Consider the following 448-residue polypeptide: Exodeoxyribonuclease 7 large subunit (448 aa).

It belongs to the XseA family. In terms of assembly, heterooligomer composed of large and small subunits.

Its subcellular location is the cytoplasm. It carries out the reaction Exonucleolytic cleavage in either 5'- to 3'- or 3'- to 5'-direction to yield nucleoside 5'-phosphates.. In terms of biological role, bidirectionally degrades single-stranded DNA into large acid-insoluble oligonucleotides, which are then degraded further into small acid-soluble oligonucleotides. This is Exodeoxyribonuclease 7 large subunit from Nitrosomonas eutropha (strain DSM 101675 / C91 / Nm57).